We begin with the raw amino-acid sequence, 347 residues long: UDP-3-O-acylglucosamine N-acyltransferase (347 aa).

H241 acts as the Proton acceptor in catalysis.

It belongs to the transferase hexapeptide repeat family. LpxD subfamily. In terms of assembly, homotrimer.

The enzyme catalyses a UDP-3-O-[(3R)-3-hydroxyacyl]-alpha-D-glucosamine + a (3R)-hydroxyacyl-[ACP] = a UDP-2-N,3-O-bis[(3R)-3-hydroxyacyl]-alpha-D-glucosamine + holo-[ACP] + H(+). Its pathway is bacterial outer membrane biogenesis; LPS lipid A biosynthesis. Functionally, catalyzes the N-acylation of UDP-3-O-acylglucosamine using 3-hydroxyacyl-ACP as the acyl donor. Is involved in the biosynthesis of lipid A, a phosphorylated glycolipid that anchors the lipopolysaccharide to the outer membrane of the cell. This chain is UDP-3-O-acylglucosamine N-acyltransferase, found in Neisseria gonorrhoeae (strain NCCP11945).